A 1014-amino-acid polypeptide reads, in one-letter code: RNA-directed RNA polymerase (1014 aa).

In terms of domain architecture, RdRp catalytic spans 618–740 (HELEEGDYTC…ANHQGEFHSY (123 aa)). The interval 918–1014 (KEEDERQPET…TLVFKNSSLS (97 aa)) is disordered. Residues 956–967 (KGKRKVKGRRPR) show a composition bias toward basic residues.

This sequence belongs to the nodaviridae RNA polymerase family.

It carries out the reaction RNA(n) + a ribonucleoside 5'-triphosphate = RNA(n+1) + diphosphate. Its function is as follows. RNA-dependent RNA polymerase which replicates the viral genome composed of 2 RNA segments, RNA1 and RNA2. The sequence is that of RNA-directed RNA polymerase from Pieris rapae (Small white butterfly).